The following is a 146-amino-acid chain: Ribosome-binding factor A (146 aa).

Residues 113-146 form a disordered region; it reads IRDEREAQEPAQDPAQDSSQDASVEASDAPDKAE.

This sequence belongs to the RbfA family. Monomer. Binds 30S ribosomal subunits, but not 50S ribosomal subunits or 70S ribosomes.

It is found in the cytoplasm. One of several proteins that assist in the late maturation steps of the functional core of the 30S ribosomal subunit. Associates with free 30S ribosomal subunits (but not with 30S subunits that are part of 70S ribosomes or polysomes). Required for efficient processing of 16S rRNA. May interact with the 5'-terminal helix region of 16S rRNA. This is Ribosome-binding factor A from Gemmatimonas aurantiaca (strain DSM 14586 / JCM 11422 / NBRC 100505 / T-27).